Consider the following 243-residue polypeptide: Probable fructoselysine utilization operon transcriptional repressor (243 aa).

The 69-residue stretch at 10–78 (QLLYATVRQR…QGKGTFVQSQ (69 aa)) folds into the HTH gntR-type domain. The H-T-H motif DNA-binding region spans 38 to 57 (ENELCTQYNVSRITIRKAIS).

Its pathway is carbohydrate metabolism; fructoselysine degradation [regulation]. Its function is as follows. May regulate the transcription of the frlABCDR operon, involved in the utilization of fructoselysine and psicoselysine. In Escherichia coli O157:H7, this protein is Probable fructoselysine utilization operon transcriptional repressor (frlR).